We begin with the raw amino-acid sequence, 453 residues long: Putative amino acid/polyamine transporter MPH_07630_2 (453 aa).

3 helical membrane passes run 2–21 (IGFS…VLVV), 30–50 (VMIW…YSMA), and 81–101 (VCGW…NFIA). N110 carries N-linked (GlcNAc...) asparagine glycosylation. Transmembrane regions (helical) follow at residues 121–141 (WHAV…SIFL) and 151–171 (AILI…LATN). The N-linked (GlcNAc...) asparagine glycan is linked to N186. 2 consecutive transmembrane segments (helical) span residues 193–213 (AYAA…YDAP) and 231–251 (IVMS…SLCF). The N-linked (GlcNAc...) asparagine glycan is linked to N274. Transmembrane regions (helical) follow at residues 277–297 (GSVA…LVCA), 330–350 (LGVP…FNSI), 358–378 (FNTV…IPLL), and 403–423 (GLLA…TFNF). A glycan (N-linked (GlcNAc...) asparagine) is linked at N435.

It belongs to the amino acid-polyamine-organocation (APC) superfamily.

The protein resides in the membrane. This chain is Putative amino acid/polyamine transporter MPH_07630_2, found in Macrophomina phaseolina (strain MS6) (Charcoal rot fungus).